The chain runs to 574 residues: Serine/threonine-protein kinase fray1 (574 aa).

The segment covering 24-41 has biased composition (basic and acidic residues); it reads NHHDLPDSDSDSSSREEE. The interval 24–64 is disordered; it reads NHHDLPDSDSDSSSREEELMNSSGGGNGKEPIGEKKKLPSH. Positions 97-357 constitute a Protein kinase domain; sequence YNLIEPIGEG…ASKLLEHKVF (261 aa). Residues 103-111 and lysine 126 each bind ATP; that span reads IGEGTEGRV. The active-site Proton acceptor is the aspartate 221. Threonine 256 is modified (phosphothreonine; by autocatalysis). Disordered regions lie at residues 381 to 447, 462 to 514, and 532 to 554; these read YRES…LVNM, LSSG…PEKE, and FGSP…HEHH. Low complexity-rich tracts occupy residues 386–403, 418–441, and 462–475; these read SPAS…PSSP, KNIK…NLSN, and LSSG…SSDL. Positions 478–491 are enriched in basic residues; sequence GHLHKIGTPKKKHS. Residues 492–506 are compositionally biased toward low complexity; sequence PSGSIGDSHGSISPP. A compositionally biased stretch (basic and acidic residues) spans 536 to 553; that stretch reads KEGDHNHQHHKSEGDHEH.

Belongs to the protein kinase superfamily. STE Ser/Thr protein kinase family. STE20 subfamily. It depends on Mn(2+) as a cofactor. Post-translationally, undergoes autophosphorylation in the catalytic domain.

It carries out the reaction L-seryl-[protein] + ATP = O-phospho-L-seryl-[protein] + ADP + H(+). The catalysed reaction is L-threonyl-[protein] + ATP = O-phospho-L-threonyl-[protein] + ADP + H(+). The sequence is that of Serine/threonine-protein kinase fray1 from Dictyostelium discoideum (Social amoeba).